A 1372-amino-acid chain; its full sequence is DNA-directed RNA polymerase subunit beta' (1372 aa).

Zn(2+) contacts are provided by C69, C71, C84, and C87. Positions 460, 462, and 464 each coordinate Mg(2+). Zn(2+) is bound by residues C808, C882, C889, and C892.

Belongs to the RNA polymerase beta' chain family. In terms of assembly, the RNAP catalytic core consists of 2 alpha, 1 beta, 1 beta' and 1 omega subunit. When a sigma factor is associated with the core the holoenzyme is formed, which can initiate transcription. Mg(2+) serves as cofactor. Requires Zn(2+) as cofactor.

The enzyme catalyses RNA(n) + a ribonucleoside 5'-triphosphate = RNA(n+1) + diphosphate. DNA-dependent RNA polymerase catalyzes the transcription of DNA into RNA using the four ribonucleoside triphosphates as substrates. This Rickettsia bellii (strain OSU 85-389) protein is DNA-directed RNA polymerase subunit beta'.